A 156-amino-acid chain; its full sequence is Small ribosomal subunit protein uS7 (156 aa).

It belongs to the universal ribosomal protein uS7 family. In terms of assembly, part of the 30S ribosomal subunit. Contacts proteins S9 and S11.

In terms of biological role, one of the primary rRNA binding proteins, it binds directly to 16S rRNA where it nucleates assembly of the head domain of the 30S subunit. Is located at the subunit interface close to the decoding center, probably blocks exit of the E-site tRNA. The sequence is that of Small ribosomal subunit protein uS7 from Pseudomonas entomophila (strain L48).